The primary structure comprises 664 residues: Alcohol oxidase (664 aa).

8 to 39 (DIIVVGGGSTGCCIAGRLANLDDQNLTVALIE) is an FAD binding site. Residue H568 is the Proton acceptor of the active site. Residues 662–664 (ARF) carry the Microbody targeting signal motif.

The protein belongs to the GMC oxidoreductase family. As to quaternary structure, homooctamer. FAD is required as a cofactor.

The protein resides in the peroxisome matrix. It carries out the reaction a primary alcohol + O2 = an aldehyde + H2O2. It participates in energy metabolism; methane degradation. Functionally, catalyzes the oxidation of methanol to formaldehyde and hydrogen peroxide, the first step in the methanol utilization pathway of methylotrophic yeasts. The chain is Alcohol oxidase (MOX) from Pichia angusta (Yeast).